The sequence spans 253 residues: Phosphate import ATP-binding protein PstB (253 aa).

The ABC transporter domain occupies 7–249 (ASAKNLNLWY…PQSSKTKRYI (243 aa)). Position 39–46 (39–46 (GPSGCGKS)) interacts with ATP.

Belongs to the ABC transporter superfamily. Phosphate importer (TC 3.A.1.7) family. In terms of assembly, the complex is composed of two ATP-binding proteins (PstB), two transmembrane proteins (PstC and PstA) and a solute-binding protein (PstS).

Its subcellular location is the cell inner membrane. It catalyses the reaction phosphate(out) + ATP + H2O = ADP + 2 phosphate(in) + H(+). Functionally, part of the ABC transporter complex PstSACB involved in phosphate import. Responsible for energy coupling to the transport system. The protein is Phosphate import ATP-binding protein PstB of Ehrlichia ruminantium (strain Gardel).